The following is a 173-amino-acid chain: Crossover junction endodeoxyribonuclease RuvC (173 aa).

Catalysis depends on residues aspartate 8, glutamate 67, and aspartate 139. Aspartate 8, glutamate 67, and aspartate 139 together coordinate Mg(2+).

It belongs to the RuvC family. Homodimer which binds Holliday junction (HJ) DNA. The HJ becomes 2-fold symmetrical on binding to RuvC with unstacked arms; it has a different conformation from HJ DNA in complex with RuvA. In the full resolvosome a probable DNA-RuvA(4)-RuvB(12)-RuvC(2) complex forms which resolves the HJ. It depends on Mg(2+) as a cofactor.

The protein localises to the cytoplasm. The enzyme catalyses Endonucleolytic cleavage at a junction such as a reciprocal single-stranded crossover between two homologous DNA duplexes (Holliday junction).. The RuvA-RuvB-RuvC complex processes Holliday junction (HJ) DNA during genetic recombination and DNA repair. Endonuclease that resolves HJ intermediates. Cleaves cruciform DNA by making single-stranded nicks across the HJ at symmetrical positions within the homologous arms, yielding a 5'-phosphate and a 3'-hydroxyl group; requires a central core of homology in the junction. The consensus cleavage sequence is 5'-(A/T)TT(C/G)-3'. Cleavage occurs on the 3'-side of the TT dinucleotide at the point of strand exchange. HJ branch migration catalyzed by RuvA-RuvB allows RuvC to scan DNA until it finds its consensus sequence, where it cleaves and resolves the cruciform DNA. The chain is Crossover junction endodeoxyribonuclease RuvC from Salmonella dublin (strain CT_02021853).